The primary structure comprises 467 residues: Acyl-CoA-binding domain-containing protein 5 (467 aa).

The ACB domain occupies 8–97 (HQTRFEAAVS…MKKIIETMPV (90 aa)). An acyl-CoA-binding positions include 19 to 28 (IQSLPKNGSF), 39 to 43 (YSFYK), Lys-65, and Tyr-84. Disordered stretches follow at residues 119–204 (KHGR…IVLN), 219–240 (TPLP…EGEP), and 304–376 (ITEN…DRGP). Over residues 125-139 (GVTSELGSVLTSTPN) the composition is skewed to polar residues. Over residues 170 to 187 (DEEDEEDETEHSEEEEKE) the composition is skewed to acidic residues. 2 stretches are compositionally biased toward basic and acidic residues: residues 312 to 322 (ELKDGGEDGKQ) and 335 to 347 (KSEH…ERSL). The span at 352–372 (GGEGSRSGQIGSSGDGDGWGS) shows a compositional bias: gly residues. Residues 382–411 (EQIAVVLMRLQEDMQNVLQRLHSLEVQTAS) adopt a coiled-coil conformation. The chain crosses the membrane as a helical span at residues 439–459 (GTLALAVVWPFVVHWLMHVFL).

This sequence belongs to the ATG37 family.

It localises to the peroxisome membrane. Functionally, acyl-CoA binding protein which acts as the peroxisome receptor for pexophagy but is dispensable for aggrephagy and nonselective autophagy. Binds medium- and long-chain acyl-CoA esters. This Xenopus laevis (African clawed frog) protein is Acyl-CoA-binding domain-containing protein 5 (acbd5).